A 597-amino-acid chain; its full sequence is Proteasome-associated ATPase (597 aa).

The span at 1–12 (MQHDRPGSRPEE) shows a compositional bias: basic and acidic residues. The disordered stretch occupies residues 1–22 (MQHDRPGSRPEEGGEQQIGGDA). A coiled-coil region spans residues 21 to 97 (DAELNSQIRL…REEVDRLAQP (77 aa)). 284 to 289 (GCGKTL) provides a ligand contact to ATP. The docks into pockets in the proteasome alpha-ring stretch occupies residues 596–597 (YL).

The protein belongs to the AAA ATPase family. As to quaternary structure, homohexamer. Assembles into a hexameric ring structure that caps the 20S proteasome core. Strongly interacts with the prokaryotic ubiquitin-like protein Pup through a hydrophobic interface; the interacting region of ARC lies in its N-terminal coiled-coil domain. There is one Pup binding site per ARC hexamer ring. Upon ATP-binding, the C-terminus of ARC interacts with the alpha-rings of the proteasome core, possibly by binding to the intersubunit pockets.

It functions in the pathway protein degradation; proteasomal Pup-dependent pathway. Its function is as follows. ATPase which is responsible for recognizing, binding, unfolding and translocation of pupylated proteins into the bacterial 20S proteasome core particle. May be essential for opening the gate of the 20S proteasome via an interaction with its C-terminus, thereby allowing substrate entry and access to the site of proteolysis. Thus, the C-termini of the proteasomal ATPase may function like a 'key in a lock' to induce gate opening and therefore regulate proteolysis. The protein is Proteasome-associated ATPase of Saccharopolyspora erythraea (strain ATCC 11635 / DSM 40517 / JCM 4748 / NBRC 13426 / NCIMB 8594 / NRRL 2338).